Reading from the N-terminus, the 273-residue chain is Replication factor A protein 2 (273 aa).

Over residues 1–13 (MATYQPYNEYSSV) the composition is skewed to polar residues. Positions 1–38 (MATYQPYNEYSSVTGGGFENSESRPGSGESETNTRVNT) are disordered. Residue Ser-27 is modified to Phosphoserine. The span at 29 to 38 (ESETNTRVNT) shows a compositional bias: polar residues. A DNA-binding region (OB) is located at residues 69 to 157 (VCFVGVVRNI…NIQYAVIKPI (89 aa)). A Phosphoserine modification is found at Ser-122.

The protein belongs to the replication factor A protein 2 family. In terms of assembly, heterotrimer of 69, 36, and 13 kDa chains. The DNA-binding activity may reside exclusively on the 69 kDa subunit. Interacts with MCM10. Phosphorylated in a cell cycle-dependent manner with phosphorylation increasing at the entry in S phase and dephosphorylation occurring at mitosis. In terms of processing, the N-terminus is blocked.

It localises to the nucleus. Its function is as follows. Binds to single-stranded sequences participating in DNA replication in addition to those mediating transcriptional repression (URS1) and activation (CAR1). Stimulates the activity of a cognate strand exchange protein (SEP1). It cooperates with T-AG and DNA topoisomerase I to unwind template DNA containing the simian virus 40 origin of DNA replication. In Saccharomyces cerevisiae (strain ATCC 204508 / S288c) (Baker's yeast), this protein is Replication factor A protein 2 (RFA2).